The primary structure comprises 124 residues: uncharacterized protein (124 aa).

The tract at residues 44–92 (DRVENSGNGTGSISAPLTDLGPSIGDSHENKGADIPIHPPLDTQSHAKD) is disordered. A compositionally biased stretch (polar residues) spans 48 to 58 (NSGNGTGSISA).

This is an uncharacterized protein from Caenorhabditis elegans.